The following is a 116-amino-acid chain: Regulator of ribonuclease activity B (116 aa).

This sequence belongs to the RraB family. In terms of assembly, interacts with the C-terminal region of Rne.

The protein resides in the cytoplasm. In terms of biological role, globally modulates RNA abundance by binding to RNase E (Rne) and regulating its endonucleolytic activity. Can modulate Rne action in a substrate-dependent manner by altering the composition of the degradosome. In Colwellia psychrerythraea (strain 34H / ATCC BAA-681) (Vibrio psychroerythus), this protein is Regulator of ribonuclease activity B.